The primary structure comprises 129 residues: UPF0225 protein XOO0258 (129 aa).

This sequence belongs to the UPF0225 family.

The polypeptide is UPF0225 protein XOO0258 (Xanthomonas oryzae pv. oryzae (strain MAFF 311018)).